The following is a 329-amino-acid chain: Oxidoreductase sirO (329 aa).

D54 contributes to the NADP(+) binding site. Catalysis depends on Y59, which acts as the Proton donor. H118 contributes to the substrate binding site. NADP(+) is bound by residues 148–149 (SN), Q174, 203–213 (SPLCCGLLINA), and 288–296 (SSARQLEES).

This sequence belongs to the aldo/keto reductase family. Aldo/keto reductase 2 subfamily.

Its pathway is mycotoxin biosynthesis. Oxidoreductase; part of the gene cluster that mediates the biosynthesis of sirodesmin PL, an epipolythiodioxopiperazine (ETP) characterized by a disulfide bridged cyclic dipeptide and that acts as a phytotoxin which is involved in the blackleg didease of canola. SirD catalyzes the O-prenylation of L-tyrosine (L-Tyr) in the presence of dimethylallyl diphosphate (DMAPP) to yield 4-O-dimethylallyl-L-Tyr, and therefore represents probably the first pathway-specific enzyme in the biosynthesis of sirodesmin PL. 4-O-dimethylallyl-L-Tyr, then undergoes condensation with L-Ser in a reaction catalyzed by the non-ribosomal peptide synthase sirP to form the diketopiperazine (DKP) backbone. Further bishydroxylation of the DKP performed by the cytochrome P450 monooxygenase sirC leads to the production of the intermediate phomamide. This step is essential to form the reactive thiol group required for toxicity of sirodesmin PL. The next steps of sirodesmin biosynthesis are not well understood yet, but some predictions could be made from intermediate compounds identification. Phomamide is converted into phomalizarine via oxidation, probably by sirT. Further oxidation, methylation (by sirM or sirN) and reduction steps convert phomalizarine to deacetyl sirodesmin. Finally, acetyltransferase sirH probably acetylates deacetyl sirodesmin to produce sirodesmin PL. The chain is Oxidoreductase sirO from Leptosphaeria maculans (Blackleg fungus).